We begin with the raw amino-acid sequence, 309 residues long: Protein FdhE homolog (309 aa).

The protein belongs to the FdhE family.

The protein localises to the cytoplasm. Necessary for formate dehydrogenase activity. The chain is Protein FdhE homolog from Pseudomonas aeruginosa (strain ATCC 15692 / DSM 22644 / CIP 104116 / JCM 14847 / LMG 12228 / 1C / PRS 101 / PAO1).